Consider the following 805-residue polypeptide: Phenylalanine--tRNA ligase beta subunit (805 aa).

The region spanning 39–148 (APPFTGVVVA…AALRPGTDIR (110 aa)) is the tRNA-binding domain. The B5 domain occupies 399–474 (PVREPVRMRL…RVYGFERIPD (76 aa)). Residues Asp452, Asp458, Glu461, and Glu462 each contribute to the Mg(2+) site. Residues 703–804 (SRQPAVVRDL…LVAAHNARQR (102 aa)) enclose the FDX-ACB domain.

It belongs to the phenylalanyl-tRNA synthetase beta subunit family. Type 1 subfamily. Tetramer of two alpha and two beta subunits. Mg(2+) serves as cofactor.

The protein resides in the cytoplasm. The enzyme catalyses tRNA(Phe) + L-phenylalanine + ATP = L-phenylalanyl-tRNA(Phe) + AMP + diphosphate + H(+). The chain is Phenylalanine--tRNA ligase beta subunit from Bordetella parapertussis (strain 12822 / ATCC BAA-587 / NCTC 13253).